A 61-amino-acid polypeptide reads, in one-letter code: Bowman-Birk type proteinase inhibitor (61 aa).

7 disulfide bridges follow: cysteine 4/cysteine 57, cysteine 5/cysteine 20, cysteine 8/cysteine 53, cysteine 10/cysteine 18, cysteine 27/cysteine 34, cysteine 31/cysteine 46, and cysteine 36/cysteine 44.

Belongs to the Bowman-Birk serine protease inhibitor family.

Its function is as follows. Strong inhibitor of trypsin with a 1:1 stoichiometry. Weaker inhibitor of chymotrypsin. The protein is Bowman-Birk type proteinase inhibitor of Erythrina variegata (Indian coral tree).